A 227-amino-acid polypeptide reads, in one-letter code: Enolase-phosphatase E1 (227 aa).

Belongs to the HAD-like hydrolase superfamily. MasA/MtnC family. As to quaternary structure, monomer. The cofactor is Mg(2+).

It catalyses the reaction 5-methylsulfanyl-2,3-dioxopentyl phosphate + H2O = 1,2-dihydroxy-5-(methylsulfanyl)pent-1-en-3-one + phosphate. It functions in the pathway amino-acid biosynthesis; L-methionine biosynthesis via salvage pathway; L-methionine from S-methyl-5-thio-alpha-D-ribose 1-phosphate: step 3/6. Its pathway is amino-acid biosynthesis; L-methionine biosynthesis via salvage pathway; L-methionine from S-methyl-5-thio-alpha-D-ribose 1-phosphate: step 4/6. Bifunctional enzyme that catalyzes the enolization of 2,3-diketo-5-methylthiopentyl-1-phosphate (DK-MTP-1-P) into the intermediate 2-hydroxy-3-keto-5-methylthiopentenyl-1-phosphate (HK-MTPenyl-1-P), which is then dephosphorylated to form the acireductone 1,2-dihydroxy-3-keto-5-methylthiopentene (DHK-MTPene). This chain is Enolase-phosphatase E1, found in Gluconobacter oxydans (strain 621H) (Gluconobacter suboxydans).